A 573-amino-acid chain; its full sequence is Sulfite reductase [NADPH] hemoprotein beta-component (573 aa).

The [4Fe-4S] cluster site is built by cysteine 438, cysteine 444, cysteine 483, and cysteine 487. Position 487 (cysteine 487) interacts with siroheme.

Belongs to the nitrite and sulfite reductase 4Fe-4S domain family. In terms of assembly, alpha(8)-beta(8). The alpha component is a flavoprotein, the beta component is a hemoprotein. It depends on siroheme as a cofactor. The cofactor is [4Fe-4S] cluster.

It carries out the reaction hydrogen sulfide + 3 NADP(+) + 3 H2O = sulfite + 3 NADPH + 4 H(+). It participates in sulfur metabolism; hydrogen sulfide biosynthesis; hydrogen sulfide from sulfite (NADPH route): step 1/1. Functionally, component of the sulfite reductase complex that catalyzes the 6-electron reduction of sulfite to sulfide. This is one of several activities required for the biosynthesis of L-cysteine from sulfate. The sequence is that of Sulfite reductase [NADPH] hemoprotein beta-component from Geobacillus thermodenitrificans (strain NG80-2).